Reading from the N-terminus, the 147-residue chain is Ribonuclease H (147 aa).

Mg(2+) is bound by residues aspartate 8, glutamate 46, aspartate 68, and aspartate 132.

The protein belongs to the RNase H family. Monomer. Requires Mg(2+) as cofactor.

The protein localises to the cytoplasm. It catalyses the reaction Endonucleolytic cleavage to 5'-phosphomonoester.. Its function is as follows. Endonuclease that specifically degrades the RNA of RNA-DNA hybrids. This is Ribonuclease H from Geotalea uraniireducens (strain Rf4) (Geobacter uraniireducens).